Here is a 234-residue protein sequence, read N- to C-terminus: Large ribosomal subunit protein uL1 (234 aa).

Belongs to the universal ribosomal protein uL1 family. Part of the 50S ribosomal subunit.

In terms of biological role, binds directly to 23S rRNA. The L1 stalk is quite mobile in the ribosome, and is involved in E site tRNA release. Protein L1 is also a translational repressor protein, it controls the translation of the L11 operon by binding to its mRNA. This chain is Large ribosomal subunit protein uL1, found in Serratia marcescens.